Here is a 1024-residue protein sequence, read N- to C-terminus: Integrator complex subunit 7 homolog (1024 aa).

Composition is skewed to polar residues over residues 1–11 (MSKYKNSSLLN) and 19–36 (PSLS…QLPP). 3 disordered regions span residues 1–109 (MSKY…PTNS), 472–502 (DNNN…NNNN), and 842–863 (NNNN…NNNN). Low complexity-rich tracts occupy residues 44-77 (STNN…NNTV), 85-96 (TAGSSTSSASSV), and 473-502 (NNNN…NNNN).

The protein belongs to the Integrator subunit 7 family. Component of the Integrator complex. The core complex associates with protein phosphatase 2A subunits, to form the Integrator-PP2A (INTAC) complex.

The protein resides in the nucleus. It is found in the chromosome. It localises to the cytoplasm. In terms of biological role, component of the integrator complex, a multiprotein complex that terminates RNA polymerase II (Pol II) transcription in the promoter-proximal region of genes. The integrator complex provides a quality checkpoint during transcription elongation by driving premature transcription termination of transcripts that are unfavorably configured for transcriptional elongation: the complex terminates transcription by (1) catalyzing dephosphorylation of the C-terminal domain (CTD) of Pol II subunit polr2a, (2) degrading the exiting nascent RNA transcript via endonuclease activity and (3) promoting the release of Pol II from bound DNA. The integrator complex is also involved in terminating the synthesis of non-coding Pol II transcripts, such as enhancer RNAs (eRNAs), small nuclear RNAs (snRNAs), telomerase RNAs and long non-coding RNAs (lncRNAs). The protein is Integrator complex subunit 7 homolog (ints7) of Dictyostelium discoideum (Social amoeba).